Consider the following 289-residue polypeptide: Bifunctional protein FolD (289 aa).

NADP(+) is bound by residues 166 to 168 (GVS) and Ile-232.

Belongs to the tetrahydrofolate dehydrogenase/cyclohydrolase family. Homodimer.

It catalyses the reaction (6R)-5,10-methylene-5,6,7,8-tetrahydrofolate + NADP(+) = (6R)-5,10-methenyltetrahydrofolate + NADPH. The enzyme catalyses (6R)-5,10-methenyltetrahydrofolate + H2O = (6R)-10-formyltetrahydrofolate + H(+). Its pathway is one-carbon metabolism; tetrahydrofolate interconversion. Its function is as follows. Catalyzes the oxidation of 5,10-methylenetetrahydrofolate to 5,10-methenyltetrahydrofolate and then the hydrolysis of 5,10-methenyltetrahydrofolate to 10-formyltetrahydrofolate. The protein is Bifunctional protein FolD of Methylobacillus flagellatus (strain ATCC 51484 / DSM 6875 / VKM B-1610 / KT).